Here is a 150-residue protein sequence, read N- to C-terminus: Large ribosomal subunit protein bL9 (150 aa).

The protein belongs to the bacterial ribosomal protein bL9 family.

In terms of biological role, binds to the 23S rRNA. This Burkholderia multivorans (strain ATCC 17616 / 249) protein is Large ribosomal subunit protein bL9.